Here is a 411-residue protein sequence, read N- to C-terminus: Flagellum-associated coiled-coil domain-containing protein 1 (411 aa).

The tract at residues 52-77 (SQPAKSTAFPRDKAQSRKLEESNKAP) is disordered. The segment covering 61–74 (PRDKAQSRKLEESN) has biased composition (basic and acidic residues). Coiled coils occupy residues 124–220 (SDII…LKNM) and 278–328 (NESF…VVLE). Residue K353 is modified to N6-acetyllysine. Residues 355 to 385 (FQTKLAEAEEKYKSTIQVLTEENNSLRQKVL) adopt a coiled-coil conformation.

Its subcellular location is the cytoplasm. The protein localises to the cytoplasmic granule. It is found in the cell projection. The protein resides in the cilium. It localises to the flagellum. The protein is Flagellum-associated coiled-coil domain-containing protein 1 of Rattus norvegicus (Rat).